Consider the following 2006-residue polypeptide: E3 ubiquitin-protein ligase PRT6 (2006 aa).

Residues Gly119–Gly189 form a UBR-type zinc finger. 2 disordered regions span residues Leu1167–Val1186 and Asp1338–Asp1380. Residues Asp1338 to Ser1348 show a composition bias toward basic and acidic residues. Polar residues predominate over residues Glu1349 to Gln1360. Residues Pro1364–Ala1377 show a composition bias toward basic and acidic residues. The RING-type; degenerate zinc-finger motif lies at Cys1395–Arg1440.

This sequence belongs to the E3 ubiquitin-protein ligase UBR1-like family.

The enzyme catalyses S-ubiquitinyl-[E2 ubiquitin-conjugating enzyme]-L-cysteine + [acceptor protein]-L-lysine = [E2 ubiquitin-conjugating enzyme]-L-cysteine + N(6)-ubiquitinyl-[acceptor protein]-L-lysine.. It functions in the pathway protein modification; protein ubiquitination. Functionally, ubiquitin protein ligase which is a component of the N-end rule pathway with arginine specificity, and functions with the arginyltransferases ATE1 and ATE2. Recognizes and binds to proteins bearing specific N-terminal residues that are destabilizing according to the N-end rule, leading to their ubiquitination and subsequent degradation. Does not participate in degradation of proteins with N-terminal Phe or Leu. The N-end rule pathway regulates seed after-ripening, seedling sugar sensitivity, seedling lipid breakdown, and abscisic acid (ABA) sensitivity of germination. The N-end rule pathway regulates various aspects of leaf and shoot development. Involved in the ubiquitination and subsequent degradation of RAP2-12, an activator of hypoxic gene expression. The ubiquitination occurs after the N-arginylation of RAP2-12 by ATE1 or ATE2 under aerobic conditions. The end-rule pathway plays a role in regulating the timing and amplitude of the immune response following infection with the bacterial pathogen Pseudomonas syringae pv tomato. Regulates the biosynthesis of plant-defense metabolites such as glucosinolates, and the biosynthesis and response to the phytohormone jasmonate (JA), which plays a key role in plant immunity. Controls the expression of specific defense-response genes, activates the synthesis pathway for the phytoalexin camalexin, and influences basal resistance to the hemibiotroph pathogen Pseudomonas syringae pv tomato. Coordinates the mobilization of seed storage reserves and regulates the abundance and activities of several proteases following seed germination. In Arabidopsis thaliana (Mouse-ear cress), this protein is E3 ubiquitin-protein ligase PRT6.